The chain runs to 78 residues: Large ribosomal subunit protein bL28 (78 aa).

Belongs to the bacterial ribosomal protein bL28 family.

This Alcanivorax borkumensis (strain ATCC 700651 / DSM 11573 / NCIMB 13689 / SK2) protein is Large ribosomal subunit protein bL28.